The primary structure comprises 255 residues: Tryptophan synthase alpha chain (255 aa).

Active-site proton acceptor residues include Glu-44 and Asp-55.

The protein belongs to the TrpA family. In terms of assembly, tetramer of two alpha and two beta chains.

It carries out the reaction (1S,2R)-1-C-(indol-3-yl)glycerol 3-phosphate + L-serine = D-glyceraldehyde 3-phosphate + L-tryptophan + H2O. The protein operates within amino-acid biosynthesis; L-tryptophan biosynthesis; L-tryptophan from chorismate: step 5/5. Functionally, the alpha subunit is responsible for the aldol cleavage of indoleglycerol phosphate to indole and glyceraldehyde 3-phosphate. The chain is Tryptophan synthase alpha chain from Dehalococcoides mccartyi (strain ATCC BAA-2100 / JCM 16839 / KCTC 5957 / BAV1).